The sequence spans 190 residues: Ras-related protein RabF1 (190 aa).

GTP is bound at residue 15 to 22 (GDSGVGKT). The Effector region motif lies at 37–44 (HITIGIEF). GTP is bound by residues 62 to 66 (DTAGE) and 119 to 122 (NKND). At Cys-187 the chain carries Cysteine methyl ester. Cys-187 carries S-geranylgeranyl cysteine lipidation. Residues 188–190 (IIN) constitute a propeptide, removed in mature form.

The protein belongs to the small GTPase superfamily. Rab family.

The protein localises to the cell membrane. This Dictyostelium discoideum (Social amoeba) protein is Ras-related protein RabF1 (rabF1-1).